The following is a 512-amino-acid chain: Cytochrome P450 monooxygenase adrA (512 aa).

Residues 12–32 (FEPVSLVGLVLLSGLFLLLTA) traverse the membrane as a helical segment. Asparagine 86, asparagine 149, and asparagine 210 each carry an N-linked (GlcNAc...) asparagine glycan. Cysteine 453 is a heme binding site.

It belongs to the cytochrome P450 family. Heme serves as cofactor.

The protein resides in the membrane. It participates in secondary metabolite biosynthesis; terpenoid biosynthesis. Its function is as follows. Cytochrome P450 monooxygenase; part of the gene cluster that mediates the biosynthesis of andrastins, meroterpenoid compounds that exhibit inhibitory activity against ras farnesyltransferase, suggesting that they could be promising leads for antitumor agents. The first step of the pathway is the synthesis of 3,5-dimethylorsellinic acid (DMOA) by the polyketide synthase adrD via condensation of one acetyl-CoA starter unit with 3 malonyl-CoA units and 2 methylations. DMAO is then converted to farnesyl-DMAO by the prenyltransferase adrG. The methyltransferase adrK catalyzes the methylation of the carboxyl group of farnesyl-DMAO to farnesyl-DMAO methyl ester which is further converted to epoxyfarnesyl-DMAO methyl ester by the FAD-dependent monooxygenase adrH. The terpene cyclase adrI then catalyzes the carbon skeletal rearrangement to generate the andrastin E, the first compound in the pathway having the andrastin scaffold, with the tetracyclic ring system. The post-cyclization tailoring enzymes adrF, adrE, adrJ, and adrA, are involved in the conversion of andrastin E into andrastin A. The short chain dehydrogenase adrF is responsible for the oxidation of the C-3 a hydroxyl group of andrastin E to yield the corresponding ketone, andrastin D. The ketoreductase adrE stereoselectively reduces the carbonyl moiety to reverse the stereochemistry of the C-3 position to yield andrastin F. The acetyltransferase adrJ is the acetyltransferase that attaches the acetyl group to the C-3 hydroxyl group of andrastin F to yield andrastin C. Finally, the cytochrome P450 monooxygenase adrA catalyzes two sequential oxidation reactions of the C-23 methyl group, to generate the corresponding alcohol andrastin B, and aldehyde andrastin A. The protein is Cytochrome P450 monooxygenase adrA of Penicillium rubens (strain ATCC 28089 / DSM 1075 / NRRL 1951 / Wisconsin 54-1255) (Penicillium chrysogenum).